The following is a 216-amino-acid chain: Guanylate kinase (216 aa).

The 179-residue stretch at 11–189 folds into the Guanylate kinase-like domain; the sequence is GVLIVISGPS…AVKKIEAILL (179 aa). Residue 18 to 25 participates in ATP binding; it reads GPSGAGKG.

This sequence belongs to the guanylate kinase family.

It localises to the cytoplasm. It catalyses the reaction GMP + ATP = GDP + ADP. Essential for recycling GMP and indirectly, cGMP. The polypeptide is Guanylate kinase (Clostridium perfringens (strain ATCC 13124 / DSM 756 / JCM 1290 / NCIMB 6125 / NCTC 8237 / Type A)).